The chain runs to 235 residues: MFIDLNVVWPTLGVKDLNLVKTVKTLERLGYTAIALNYQYDGKLQNVIKNPIVKELYPEQKIKIYSRITLTIESMPQNKVLSNVTKEFDILAIRPIGDRLLQQTCSDLEFDILSIDFTQRLPFYLKHTFMGLAVSRDIGIEISYSSGLRDVSNRRNLITNATSLVRATRGRGIIVTSETRTPLECRAGFDVINLATFWDLKQDQARKSVGESCRSVLLHAETRRDTYRSILNGCH.

Belongs to the eukaryotic/archaeal RNase P protein component 3 family.

The protein localises to the nucleus. It catalyses the reaction Endonucleolytic cleavage of RNA, removing 5'-extranucleotides from tRNA precursor.. Its function is as follows. Part of ribonuclease P, a protein complex that generates mature tRNA molecules by cleaving their 5'-ends. The polypeptide is Probable ribonuclease P protein subunit 3 (Schizosaccharomyces pombe (strain 972 / ATCC 24843) (Fission yeast)).